The following is a 126-amino-acid chain: UPF0102 protein HD_0802 (126 aa).

The protein belongs to the UPF0102 family.

This chain is UPF0102 protein HD_0802, found in Haemophilus ducreyi (strain 35000HP / ATCC 700724).